Reading from the N-terminus, the 538-residue chain is Phosphoenolpyruvate carboxykinase (ATP) (538 aa).

Substrate is bound at residue Arg-64. Residues Asn-149 and Phe-151 each contribute to the Ca(2+) site. Substrate-binding residues include Tyr-206 and Lys-212. Residues Lys-212, His-231, and 247-255 (GLSGTGKTT) each bind ATP. Mn(2+)-binding residues include Lys-212 and His-231. Asp-268 serves as a coordination point for Mn(2+). Residues Glu-296, Arg-332, 447–448 (RI), and Thr-453 contribute to the ATP site. Substrate is bound at residue Arg-332.

This sequence belongs to the phosphoenolpyruvate carboxykinase (ATP) family. Monomer. Requires Mn(2+) as cofactor.

The protein resides in the cytoplasm. It catalyses the reaction oxaloacetate + ATP = phosphoenolpyruvate + ADP + CO2. It functions in the pathway carbohydrate biosynthesis; gluconeogenesis. Its activity is regulated as follows. Allosterically activated by calcium. Its function is as follows. Involved in the gluconeogenesis. Catalyzes the conversion of oxaloacetate (OAA) to phosphoenolpyruvate (PEP) through direct phosphoryl transfer between the nucleoside triphosphate and OAA. This is Phosphoenolpyruvate carboxykinase (ATP) from Salmonella typhimurium (strain LT2 / SGSC1412 / ATCC 700720).